We begin with the raw amino-acid sequence, 1501 residues long: Inactive protein tyrosine kinase pTKL (1501 aa).

Asparagine 64, asparagine 128, and asparagine 133 each carry an N-linked (GlcNAc...) asparagine glycan. Residues 204–221 (KKNKKNKKNKKKKNKKTK) are compositionally biased toward basic residues. Residues 204–223 (KKNKKNKKNKKKKNKKTKNT) are disordered. Residues asparagine 239, asparagine 242, asparagine 258, and asparagine 327 are each glycosylated (N-linked (GlcNAc...) asparagine). The segment covering 257–273 (MNISLHEKNDKKNEKKN) has biased composition (basic and acidic residues). The interval 257–276 (MNISLHEKNDKKNEKKNEKK) is disordered. The SAM domain maps to 301–366 (WSLREVIQWL…LQLIKNLQVM (66 aa)). The segment at 392–425 (NKNIKKGKNIKKEKKKKKEKNIKKEKKKKKKETK) is disordered. The segment covering 394–424 (NIKKGKNIKKEKKKKKEKNIKKEKKKKKKET) has biased composition (basic residues). Positions 399–433 (KNIKKEKKKKKEKNIKKEKKKKKKETKKFNNMDKK) form a coiled coil. 3 N-linked (GlcNAc...) asparagine glycosylation sites follow: asparagine 448, asparagine 463, and asparagine 471. The RVxF motif 1 signature appears at 483–486 (KVSF). The N-linked (GlcNAc...) asparagine glycan is linked to asparagine 506. The span at 543–597 (QLSSPLSSPLSSPSPSSSPSSSPSSSPSSSPSSSPSPSSSPSPSSSPSSSPSSSP) shows a compositional bias: low complexity. The tract at residues 543-607 (QLSSPLSSPL…SSPPSPLSYK (65 aa)) is disordered. Asparagine 652 is a glycosylation site (N-linked (GlcNAc...) asparagine). The disordered stretch occupies residues 659–678 (IKKSKSKYNNDKKEQKKLPL). The span at 666-675 (YNNDKKEQKK) shows a compositional bias: basic and acidic residues. Residues asparagine 681, asparagine 712, asparagine 737, asparagine 811, and asparagine 819 are each glycosylated (N-linked (GlcNAc...) asparagine). Residues 836-844 (QNINNFGKY) and lysine 864 each bind ATP. 4 N-linked (GlcNAc...) asparagine glycosylation sites follow: asparagine 1024, asparagine 1031, asparagine 1074, and asparagine 1157. Positions 1088 to 1483 (FHYQHNVLCG…HILKTISTLY (396 aa)) constitute a Protein kinase domain. An RVxF motif 2 motif is present at residues 1238 to 1241 (KVLF). N-linked (GlcNAc...) asparagine glycosylation occurs at asparagine 1382.

Belongs to the protein kinase superfamily. TKL Ser/Thr protein kinase family. In terms of assembly, interacts (via RVxF motif 1 and/or 2) with phosphatase PP1C. May interact (via SAM domain) with SERA5 (via C-terminus).

It localises to the parasitophorous vacuole. The protein localises to the host cell membrane. Its subcellular location is the host cytoplasm. The protein resides in the host cytoskeleton. The sequence is that of Inactive protein tyrosine kinase pTKL from Plasmodium falciparum (isolate 3D7).